A 264-amino-acid chain; its full sequence is uncharacterized protein (264 aa).

A run of 3 helical transmembrane segments spans residues 48–68 (LTIT…LLVF), 112–132 (ITPS…FLLA), and 142–162 (LPIA…SYLI). Position 260 is a phosphoserine (Ser260).

Its subcellular location is the membrane. This is an uncharacterized protein from Schizosaccharomyces pombe (strain 972 / ATCC 24843) (Fission yeast).